Here is a 109-residue protein sequence, read N- to C-terminus: Iron-sulfur cluster assembly protein CyaY (109 aa).

The protein belongs to the frataxin family.

Its function is as follows. Involved in iron-sulfur (Fe-S) cluster assembly. May act as a regulator of Fe-S biogenesis. In Shewanella baltica (strain OS155 / ATCC BAA-1091), this protein is Iron-sulfur cluster assembly protein CyaY.